The chain runs to 431 residues: Ribosomal RNA small subunit methyltransferase B (431 aa).

S-adenosyl-L-methionine contacts are provided by residues 254–260 (CAAPGGK), D277, D303, and D322. The active-site Nucleophile is C375. Positions 398 to 417 (LHATGTPASPGQQNLPGPEE) are disordered. Residues 403-412 (TPASPGQQNL) are compositionally biased toward polar residues.

It belongs to the class I-like SAM-binding methyltransferase superfamily. RsmB/NOP family.

The protein resides in the cytoplasm. The enzyme catalyses cytidine(967) in 16S rRNA + S-adenosyl-L-methionine = 5-methylcytidine(967) in 16S rRNA + S-adenosyl-L-homocysteine + H(+). In terms of biological role, specifically methylates the cytosine at position 967 (m5C967) of 16S rRNA. The protein is Ribosomal RNA small subunit methyltransferase B of Klebsiella pneumoniae (strain 342).